Reading from the N-terminus, the 221-residue chain is Prolactin-3B1 (221 aa).

Positions 1–30 (MQLPLTPLSFSGTLLLMAMSNFLLWEHVTS) are cleaved as a signal peptide. 2 disulfide bridges follow: Cys81–Cys196 and Cys213–Cys221.

The protein belongs to the somatotropin/prolactin family.

It localises to the secreted. This Mesocricetus auratus (Golden hamster) protein is Prolactin-3B1 (PRL3B1).